Reading from the N-terminus, the 367-residue chain is 3-isopropylmalate dehydrogenase (367 aa).

Residue 77-90 (GPKWDAVPYEVRPE) coordinates NAD(+). R97, R107, R135, and D226 together coordinate substrate. Mg(2+) contacts are provided by D226, D250, and D254. 290-302 (GSAPDIAGKGIAN) lines the NAD(+) pocket.

The protein belongs to the isocitrate and isopropylmalate dehydrogenases family. LeuB type 1 subfamily. As to quaternary structure, homodimer. The cofactor is Mg(2+). Mn(2+) is required as a cofactor.

Its subcellular location is the cytoplasm. The enzyme catalyses (2R,3S)-3-isopropylmalate + NAD(+) = 4-methyl-2-oxopentanoate + CO2 + NADH. It functions in the pathway amino-acid biosynthesis; L-leucine biosynthesis; L-leucine from 3-methyl-2-oxobutanoate: step 3/4. Catalyzes the oxidation of 3-carboxy-2-hydroxy-4-methylpentanoate (3-isopropylmalate) to 3-carboxy-4-methyl-2-oxopentanoate. The product decarboxylates to 4-methyl-2 oxopentanoate. This Mesorhizobium japonicum (strain LMG 29417 / CECT 9101 / MAFF 303099) (Mesorhizobium loti (strain MAFF 303099)) protein is 3-isopropylmalate dehydrogenase.